Here is a 356-residue protein sequence, read N- to C-terminus: DNA polymerase IV (356 aa).

The UmuC domain maps to 1 to 188 (MDTSRKIIHI…IPVTKFYGVG (188 aa)). Mg(2+) is bound by residues D11 and D106. E107 is an active-site residue.

Belongs to the DNA polymerase type-Y family. As to quaternary structure, monomer. Mg(2+) is required as a cofactor.

It is found in the cytoplasm. The enzyme catalyses DNA(n) + a 2'-deoxyribonucleoside 5'-triphosphate = DNA(n+1) + diphosphate. In terms of biological role, poorly processive, error-prone DNA polymerase involved in untargeted mutagenesis. Copies undamaged DNA at stalled replication forks, which arise in vivo from mismatched or misaligned primer ends. These misaligned primers can be extended by PolIV. Exhibits no 3'-5' exonuclease (proofreading) activity. May be involved in translesional synthesis, in conjunction with the beta clamp from PolIII. The chain is DNA polymerase IV from Listeria monocytogenes serotype 4b (strain F2365).